The primary structure comprises 203 residues: Probable metallo-hydrolase MJ0296 (203 aa).

Residues H86, H88, D90, H91, H135, D152, and H193 each contribute to the Zn(2+) site.

This sequence belongs to the metallo-beta-lactamase superfamily. It depends on Zn(2+) as a cofactor.

The chain is Probable metallo-hydrolase MJ0296 from Methanocaldococcus jannaschii (strain ATCC 43067 / DSM 2661 / JAL-1 / JCM 10045 / NBRC 100440) (Methanococcus jannaschii).